The primary structure comprises 706 residues: Polyribonucleotide nucleotidyltransferase (706 aa).

Mg(2+) is bound by residues Asp486 and Asp492. The region spanning 553-612 (PRIYTMKINPEKIKDVIGKGGSVIRALTDETGTTIEIEDDGTIKIAATDGDKAKHAIRRI) is the KH domain. The 69-residue stretch at 622–690 (NRIYAGKVTR…RQGRIRLSMK (69 aa)) folds into the S1 motif domain.

It belongs to the polyribonucleotide nucleotidyltransferase family. As to quaternary structure, component of the RNA degradosome, which is a multiprotein complex involved in RNA processing and mRNA degradation. Mg(2+) serves as cofactor.

It is found in the cytoplasm. The enzyme catalyses RNA(n+1) + phosphate = RNA(n) + a ribonucleoside 5'-diphosphate. Involved in mRNA degradation. Catalyzes the phosphorolysis of single-stranded polyribonucleotides processively in the 3'- to 5'-direction. The chain is Polyribonucleotide nucleotidyltransferase from Yersinia enterocolitica serotype O:8 / biotype 1B (strain NCTC 13174 / 8081).